The following is a 305-amino-acid chain: NAD kinase (305 aa).

Aspartate 76 serves as the catalytic Proton acceptor. NAD(+) is bound by residues 76–77 (DG), 150–151 (ND), arginine 161, and aspartate 180.

Belongs to the NAD kinase family. A divalent metal cation is required as a cofactor.

It is found in the cytoplasm. The enzyme catalyses NAD(+) + ATP = ADP + NADP(+) + H(+). Its function is as follows. Involved in the regulation of the intracellular balance of NAD and NADP, and is a key enzyme in the biosynthesis of NADP. Catalyzes specifically the phosphorylation on 2'-hydroxyl of the adenosine moiety of NAD to yield NADP. The chain is NAD kinase from Treponema pallidum (strain Nichols).